Here is a 175-residue protein sequence, read N- to C-terminus: Cell number regulator 9 (175 aa).

The next 2 membrane-spanning stretches (helical) occupy residues 53–73 and 80–100; these read GLCC…AEIV and CGVA…HWIY.

The protein belongs to the cornifelin family. In terms of tissue distribution, expressed in roots, coleoptiles, leaves and stalks.

It is found in the membrane. This Zea mays (Maize) protein is Cell number regulator 9 (CNR9).